A 356-amino-acid polypeptide reads, in one-letter code: Zinc finger protein 830 (356 aa).

Positions 11–33 (AQEELRKLMKAKQRESSSKKRIE) form a coiled coil. The C2H2-type zinc-finger motif lies at 47–69 (CVVCNSLIKSELLWPAHILGKQH). The interval 71–195 (EKVAELKGTK…PTSSADNLPA (125 aa)) is disordered. The span at 80–90 (KATTSSPSNTI) shows a compositional bias: polar residues. Basic and acidic residues-rich tracts occupy residues 99-118 (KGSE…EDHP) and 125-135 (LPEEFFEKEKT). Acidic residues predominate over residues 150–165 (DYEDVDDDDAEEGEEY). Residues 278 to 322 (AEEDEEGRLDRQIDEIDEQIQCYRRVEHLRDRKDTLQDAKMEVLK) adopt a coiled-coil conformation.

Its subcellular location is the nucleus. It localises to the chromosome. It is found in the nucleus speckle. Functionally, may act as an important regulator of the cell cycle that participates in the maintenance of genome integrity. The polypeptide is Zinc finger protein 830 (Xenopus laevis (African clawed frog)).